Here is a 263-residue protein sequence, read N- to C-terminus: Cytochrome c oxidase subunit 3 (263 aa).

7 helical membrane-spanning segments follow: residues 7-27 (ITVL…KAHL), 44-64 (FSVG…VYSI), 78-98 (GMLS…WGIL), 120-140 (LILT…CLQF), 145-165 (GMSL…ECFA), 191-211 (VTGL…IYFI), and 241-261 (ITIL…YFFY).

This sequence belongs to the cytochrome c oxidase subunit 3 family. In terms of assembly, component of the cytochrome c oxidase (complex IV, CIV), a multisubunit enzyme composed of a catalytic core of 3 subunits and several supernumerary subunits. The complex exists as a monomer or a dimer and forms supercomplexes (SCs) in the inner mitochondrial membrane with ubiquinol-cytochrome c oxidoreductase (cytochrome b-c1 complex, complex III, CIII).

The protein localises to the mitochondrion inner membrane. The enzyme catalyses 4 Fe(II)-[cytochrome c] + O2 + 8 H(+)(in) = 4 Fe(III)-[cytochrome c] + 2 H2O + 4 H(+)(out). In terms of biological role, component of the cytochrome c oxidase, the last enzyme in the mitochondrial electron transport chain which drives oxidative phosphorylation. The respiratory chain contains 3 multisubunit complexes succinate dehydrogenase (complex II, CII), ubiquinol-cytochrome c oxidoreductase (cytochrome b-c1 complex, complex III, CIII) and cytochrome c oxidase (complex IV, CIV), that cooperate to transfer electrons derived from NADH and succinate to molecular oxygen, creating an electrochemical gradient over the inner membrane that drives transmembrane transport and the ATP synthase. Cytochrome c oxidase is the component of the respiratory chain that catalyzes the reduction of oxygen to water. Electrons originating from reduced cytochrome c in the intermembrane space (IMS) are transferred via the dinuclear copper A center (CU(A)) of subunit 2 and heme A of subunit 1 to the active site in subunit 1, a binuclear center (BNC) formed by heme A3 and copper B (CU(B)). The BNC reduces molecular oxygen to 2 water molecules using 4 electrons from cytochrome c in the IMS and 4 protons from the mitochondrial matrix. This is Cytochrome c oxidase subunit 3 (COIII) from Plasmodium vivax.